The primary structure comprises 468 residues: Bifunctional protein GlmU (468 aa).

The tract at residues 1 to 233 (MAQAGSASPL…LEEANLVNDR (233 aa)) is pyrophosphorylase. Residues 15–18 (LAAG), Lys29, Gln79, and 84–85 (GT) contribute to the UDP-N-acetyl-alpha-D-glucosamine site. Asp109 is a Mg(2+) binding site. UDP-N-acetyl-alpha-D-glucosamine contacts are provided by Gly146, Glu159, Asn174, and Asn231. Asn231 is a Mg(2+) binding site. The segment at 234 to 254 (SQLARAEEILRRRILDAHMKE) is linker. Positions 255 to 468 (GVTVRDPVST…GDRRRARTEG (214 aa)) are N-acetyltransferase. Arg336 and Lys354 together coordinate UDP-N-acetyl-alpha-D-glucosamine. The Proton acceptor role is filled by His366. Positions 369 and 380 each coordinate UDP-N-acetyl-alpha-D-glucosamine. Acetyl-CoA-binding positions include Ala383, 389–390 (NY), and Ala426.

It in the N-terminal section; belongs to the N-acetylglucosamine-1-phosphate uridyltransferase family. This sequence in the C-terminal section; belongs to the transferase hexapeptide repeat family. In terms of assembly, homotrimer. Mg(2+) is required as a cofactor.

The protein resides in the cytoplasm. It carries out the reaction alpha-D-glucosamine 1-phosphate + acetyl-CoA = N-acetyl-alpha-D-glucosamine 1-phosphate + CoA + H(+). The catalysed reaction is N-acetyl-alpha-D-glucosamine 1-phosphate + UTP + H(+) = UDP-N-acetyl-alpha-D-glucosamine + diphosphate. It participates in nucleotide-sugar biosynthesis; UDP-N-acetyl-alpha-D-glucosamine biosynthesis; N-acetyl-alpha-D-glucosamine 1-phosphate from alpha-D-glucosamine 6-phosphate (route II): step 2/2. Its pathway is nucleotide-sugar biosynthesis; UDP-N-acetyl-alpha-D-glucosamine biosynthesis; UDP-N-acetyl-alpha-D-glucosamine from N-acetyl-alpha-D-glucosamine 1-phosphate: step 1/1. The protein operates within bacterial outer membrane biogenesis; LPS lipid A biosynthesis. In terms of biological role, catalyzes the last two sequential reactions in the de novo biosynthetic pathway for UDP-N-acetylglucosamine (UDP-GlcNAc). The C-terminal domain catalyzes the transfer of acetyl group from acetyl coenzyme A to glucosamine-1-phosphate (GlcN-1-P) to produce N-acetylglucosamine-1-phosphate (GlcNAc-1-P), which is converted into UDP-GlcNAc by the transfer of uridine 5-monophosphate (from uridine 5-triphosphate), a reaction catalyzed by the N-terminal domain. This chain is Bifunctional protein GlmU, found in Rubrobacter xylanophilus (strain DSM 9941 / JCM 11954 / NBRC 16129 / PRD-1).